Reading from the N-terminus, the 469-residue chain is 3-isopropylmalate dehydratase large subunit (469 aa).

3 residues coordinate [4Fe-4S] cluster: Cys-347, Cys-407, and Cys-410.

This sequence belongs to the aconitase/IPM isomerase family. LeuC type 1 subfamily. Heterodimer of LeuC and LeuD. Requires [4Fe-4S] cluster as cofactor.

The enzyme catalyses (2R,3S)-3-isopropylmalate = (2S)-2-isopropylmalate. It participates in amino-acid biosynthesis; L-leucine biosynthesis; L-leucine from 3-methyl-2-oxobutanoate: step 2/4. Catalyzes the isomerization between 2-isopropylmalate and 3-isopropylmalate, via the formation of 2-isopropylmaleate. In Proteus mirabilis (strain HI4320), this protein is 3-isopropylmalate dehydratase large subunit.